A 505-amino-acid polypeptide reads, in one-letter code: Lysine--tRNA ligase (505 aa).

Mg(2+) contacts are provided by glutamate 415 and glutamate 422.

The protein belongs to the class-II aminoacyl-tRNA synthetase family. Homodimer. It depends on Mg(2+) as a cofactor.

Its subcellular location is the cytoplasm. It catalyses the reaction tRNA(Lys) + L-lysine + ATP = L-lysyl-tRNA(Lys) + AMP + diphosphate. In Shigella boydii serotype 4 (strain Sb227), this protein is Lysine--tRNA ligase.